The following is a 74-amino-acid chain: Cecropin-P2 (74 aa).

The signal sequence occupies residues 1–13 (MIFIYLLVQTAES). A propeptide spans 45–74 (RRRFVVQQDTISPRLEVDERFLPNSVQEQI) (removed in mature form).

It belongs to the cecropin family. Expressed in the body wall, intestine, uterus and ovary.

It localises to the secreted. Its function is as follows. Has antibacterial activity against several Gram-positive and Gram-negative bacteria. Is weakly active against yeasts. Acts by a nonpore mechanism. In Ascaris suum (Pig roundworm), this protein is Cecropin-P2 (ASCEC-2).